We begin with the raw amino-acid sequence, 247 residues long: MNHIQGSLIYEGKAKRVFACENPNRVLIEFKNDATAFNAKKRSEIDGKGRLNCKISAALFKLLELNGIPTHFLELQSETFMIADKINVIPLEVVIRNIATGSLCRETPINQGTILNPPLLDYYYKDDELGDPILTERRLKLLDLISTSQIEKIETITKTVNKILKEYFDDLDLLLVDFKLEFGFNSLGEIVIADEISPDNCRFWDKTNSDPKGRILDKDRFRQDLGGVIDAYGEILKRIERDSSNSS.

It belongs to the SAICAR synthetase family.

It carries out the reaction 5-amino-1-(5-phospho-D-ribosyl)imidazole-4-carboxylate + L-aspartate + ATP = (2S)-2-[5-amino-1-(5-phospho-beta-D-ribosyl)imidazole-4-carboxamido]succinate + ADP + phosphate + 2 H(+). It functions in the pathway purine metabolism; IMP biosynthesis via de novo pathway; 5-amino-1-(5-phospho-D-ribosyl)imidazole-4-carboxamide from 5-amino-1-(5-phospho-D-ribosyl)imidazole-4-carboxylate: step 1/2. The protein is Phosphoribosylaminoimidazole-succinocarboxamide synthase of Prochlorococcus marinus (strain NATL1A).